Consider the following 163-residue polypeptide: 3-isopropylmalate dehydratase small subunit (163 aa).

Belongs to the LeuD family. LeuD type 2 subfamily. Heterodimer of LeuC and LeuD.

The catalysed reaction is (2R,3S)-3-isopropylmalate = (2S)-2-isopropylmalate. Its pathway is amino-acid biosynthesis; L-leucine biosynthesis; L-leucine from 3-methyl-2-oxobutanoate: step 2/4. Functionally, catalyzes the isomerization between 2-isopropylmalate and 3-isopropylmalate, via the formation of 2-isopropylmaleate. In Brachyspira hyodysenteriae (strain ATCC 49526 / WA1), this protein is 3-isopropylmalate dehydratase small subunit.